Reading from the N-terminus, the 166-residue chain is Putative universal stress protein SA1532 (166 aa).

This sequence belongs to the universal stress protein A family.

The protein resides in the cytoplasm. The polypeptide is Putative universal stress protein SA1532 (Staphylococcus aureus (strain N315)).